Here is a 506-residue protein sequence, read N- to C-terminus: CTL-like protein DDB_G0269978 (506 aa).

Residues Asn-15 and Asn-41 are each glycosylated (N-linked (GlcNAc...) asparagine). 12 consecutive transmembrane segments (helical) span residues 91–111, 126–146, 161–181, 182–202, 226–246, 256–276, 279–299, 323–343, 345–367, 371–393, 416–436, and 447–467; these read LLYSVLFAIQMVLFITMTVIA, LQGLLIIAISIPLILAFFLIW, SFFSLMITGILFIGLLIGNGW, YSWAIVFGITLISLIFFYFAF, TLLVSFVCLIISCVYYNIWLF, SYWTAWSYMKFMFLVFNLYWT, VITYTCYSVVSGLVASWYFFA, FGSIAFGSLLVCLVQMVQFIC, GFARVPGLTSLFCNCLQFIALIF, LYTFNIYTFSMVSIYGQSFCNSS, ITMLSVSLSMFLIIGFIVTMI, and WLYVQLVMFLFILYKPFDIIF.

This sequence belongs to the CTL (choline transporter-like) family.

It is found in the membrane. This chain is CTL-like protein DDB_G0269978, found in Dictyostelium discoideum (Social amoeba).